We begin with the raw amino-acid sequence, 368 residues long: Protein-glutamate methylesterase/protein-glutamine glutaminase (368 aa).

The Response regulatory domain maps to 9–126 (RVLVVDDSAF…SINMRELKDE (118 aa)). At Asp60 the chain carries 4-aspartylphosphate. Residues 161 to 354 (SVPARIAVAI…ETVVRAVEMI (194 aa)) enclose the CheB-type methylesterase domain. Catalysis depends on residues Ser173, His200, and Asp296.

It belongs to the CheB family. Post-translationally, phosphorylated by CheA. Phosphorylation of the N-terminal regulatory domain activates the methylesterase activity.

It localises to the cytoplasm. The catalysed reaction is [protein]-L-glutamate 5-O-methyl ester + H2O = L-glutamyl-[protein] + methanol + H(+). It carries out the reaction L-glutaminyl-[protein] + H2O = L-glutamyl-[protein] + NH4(+). Its function is as follows. Involved in chemotaxis. Part of a chemotaxis signal transduction system that modulates chemotaxis in response to various stimuli. Catalyzes the demethylation of specific methylglutamate residues introduced into the chemoreceptors (methyl-accepting chemotaxis proteins or MCP) by CheR. Also mediates the irreversible deamidation of specific glutamine residues to glutamic acid. The sequence is that of Protein-glutamate methylesterase/protein-glutamine glutaminase from Pyrococcus abyssi (strain GE5 / Orsay).